A 337-amino-acid polypeptide reads, in one-letter code: U11/U12 small nuclear ribonucleoprotein 48 kDa protein (337 aa).

The CHHC U11-48K-type zinc-finger motif lies at 55–82 (IAICPYDSNHRMPKSSLTKHMESCRLRK). Residues C58, H64, H74, and C78 each coordinate Zn(2+). Glycyl lysine isopeptide (Lys-Gly) (interchain with G-Cter in SUMO2) cross-links involve residues K87 and K104. The segment covering 255–276 (HWQEEQGRAGDAAEKNEERRSA) has biased composition (basic and acidic residues). The disordered stretch occupies residues 255–337 (HWQEEQGRAG…HSHKRRKQKI (83 aa)). Positions 294 to 310 (RHRRARSRSPHKRKRNK) are enriched in basic residues. Residues 311–326 (DKSSESRRRKERDGER) are compositionally biased toward basic and acidic residues. The segment covering 327 to 337 (HHSHKRRKQKI) has biased composition (basic residues).

As to quaternary structure, component of the U11/U12 snRNPs that are part of the U12-type spliceosome. Not found in the major spliceosome.

The protein localises to the nucleus. Its function is as follows. Likely involved in U12-type 5' splice site recognition. The polypeptide is U11/U12 small nuclear ribonucleoprotein 48 kDa protein (Snrnp48) (Mus musculus (Mouse)).